The following is a 358-amino-acid chain: Peroxidase 54 (358 aa).

Residues 1–31 form the signal peptide; it reads MAVTSSSSTCDGFFIISLIVIVSSLFGTSSA. Position 32 is a pyrrolidone carboxylic acid (glutamine 32). Asparagine 34 and asparagine 44 each carry an N-linked (GlcNAc...) asparagine glycan. Cystine bridges form between cysteine 42–cysteine 122, cysteine 75–cysteine 80, cysteine 128–cysteine 330, and cysteine 207–cysteine 239. Histidine 73 serves as the catalytic Proton acceptor. Residues aspartate 74, valine 77, glycine 79, aspartate 81, and serine 83 each coordinate Ca(2+). N-linked (GlcNAc...) asparagine glycosylation is found at asparagine 103, asparagine 161, and asparagine 166. Proline 170 provides a ligand contact to substrate. The N-linked (GlcNAc...) asparagine glycan is linked to asparagine 178. Residue histidine 200 coordinates heme b. Ca(2+) is bound at residue threonine 201. N-linked (GlcNAc...) asparagine glycosylation is found at asparagine 218, asparagine 228, and asparagine 242. Residues aspartate 252, threonine 255, and aspartate 260 each coordinate Ca(2+). The N-linked (GlcNAc...) asparagine glycan is linked to asparagine 298.

It belongs to the peroxidase family. Classical plant (class III) peroxidase subfamily. The cofactor is heme b. It depends on Ca(2+) as a cofactor.

It localises to the secreted. The protein resides in the vacuole. It catalyses the reaction 2 a phenolic donor + H2O2 = 2 a phenolic radical donor + 2 H2O. Its function is as follows. Removal of H(2)O(2), oxidation of toxic reductants, biosynthesis and degradation of lignin, suberization, auxin catabolism, response to environmental stresses such as wounding, pathogen attack and oxidative stress. These functions might be dependent on each isozyme/isoform in each plant tissue. The sequence is that of Peroxidase 54 (PER54) from Arabidopsis thaliana (Mouse-ear cress).